Here is a 341-residue protein sequence, read N- to C-terminus: Aspartate--ammonia ligase (341 aa).

It belongs to the class-II aminoacyl-tRNA synthetase family. AsnA subfamily.

The protein localises to the cytoplasm. The catalysed reaction is L-aspartate + NH4(+) + ATP = L-asparagine + AMP + diphosphate + H(+). It functions in the pathway amino-acid biosynthesis; L-asparagine biosynthesis; L-asparagine from L-aspartate (ammonia route): step 1/1. This chain is Aspartate--ammonia ligase, found in Clostridium tetani (strain Massachusetts / E88).